Here is a 464-residue protein sequence, read N- to C-terminus: Argininosuccinate lyase (464 aa).

The protein belongs to the lyase 1 family. Argininosuccinate lyase subfamily.

Its subcellular location is the cytoplasm. It catalyses the reaction 2-(N(omega)-L-arginino)succinate = fumarate + L-arginine. Its pathway is amino-acid biosynthesis; L-arginine biosynthesis; L-arginine from L-ornithine and carbamoyl phosphate: step 3/3. The chain is Argininosuccinate lyase from Frankia casuarinae (strain DSM 45818 / CECT 9043 / HFP020203 / CcI3).